The sequence spans 118 residues: MASQSQGIQQLLQAEKRAAEKVSEARKRKNRRLKQAKEEAQAEIEQYRLQREKEFKAKEAAALGSHGSCSSEVEKETREKMTVLQNYFEQNRDEVLDNLLAFVCDIRPEIHENYRING.

Ala2 is modified (N-acetylalanine).

This sequence belongs to the V-ATPase G subunit family. In terms of assembly, V-ATPase is a heteromultimeric enzyme made up of two complexes: the ATP-hydrolytic V1 complex and the proton translocation V0 complex. The V1 complex consists of three catalytic AB heterodimers that form a heterohexamer, three peripheral stalks each consisting of EG heterodimers, one central rotor including subunits D and F, and the regulatory subunits C and H. The proton translocation complex V0 consists of the proton transport subunit a, a ring of proteolipid subunits c9c'', rotary subunit d, subunits e and f, and the accessory subunits ATP6AP1/Ac45 and ATP6AP2/PRR. In terms of tissue distribution, kidney; localizes to early distal nephron, encompassing thick ascending limbs and distal convoluted tubules (at protein level). Ubiquitous.

It is found in the apical cell membrane. Its function is as follows. Subunit of the V1 complex of vacuolar(H+)-ATPase (V-ATPase), a multisubunit enzyme composed of a peripheral complex (V1) that hydrolyzes ATP and a membrane integral complex (V0) that translocates protons. V-ATPase is responsible for acidifying and maintaining the pH of intracellular compartments and in some cell types, is targeted to the plasma membrane, where it is responsible for acidifying the extracellular environment. In aerobic conditions, involved in intracellular iron homeostasis, thus triggering the activity of Fe(2+) prolyl hydroxylase (PHD) enzymes, and leading to HIF1A hydroxylation and subsequent proteasomal degradation. The protein is V-type proton ATPase subunit G 1 (Atp6v1g1) of Mus musculus (Mouse).